The chain runs to 270 residues: Interleukin-1 beta (270 aa).

Positions 1–118 are excised as a propeptide; it reads MATVPEPTSE…VYDDDAFVCD (118 aa).

This sequence belongs to the IL-1 family. As to quaternary structure, monomer. In its precursor form, weakly interacts with full-length MEFV; the mature cytokine does not interact at all. Interacts with integrins ITGAV:ITGBV and ITGA5:ITGB1; integrin-binding is required for IL1B signaling. Interacts with cargo receptor TMED10; the interaction is direct and is required for the secretion of IL1B mature form. Interacts with HSP90AB1; the interaction facilitates cargo translocation into the ERGIC. Interacts with HSP90B1; the interaction facilitates cargo translocation into the ERGIC.

It localises to the cytoplasm. It is found in the cytosol. The protein localises to the secreted. The protein resides in the lysosome. Its subcellular location is the extracellular exosome. Its function is as follows. Potent pro-inflammatory cytokine. Initially discovered as the major endogenous pyrogen, induces prostaglandin synthesis, neutrophil influx and activation, T-cell activation and cytokine production, B-cell activation and antibody production, and fibroblast proliferation and collagen production. Promotes Th17 differentiation of T-cells. Synergizes with IL12/interleukin-12 to induce IFNG synthesis from T-helper 1 (Th1) cells. Plays a role in angiogenesis by inducing VEGF production synergistically with TNF and IL6. Involved in transduction of inflammation downstream of pyroptosis: its mature form is specifically released in the extracellular milieu by passing through the gasdermin-D (GSDMD) pore. The chain is Interleukin-1 beta (IL1B) from Phoca vitulina richardii (Pacific harbor seal).